Consider the following 393-residue polypeptide: Cell division protein FtsZ 2 (393 aa).

The disordered stretch occupies residues 1–28 (MQDIVQDALDNAEAEQREMDGDGDGDEF). Residues 40–44 (GAGNN), 127–129 (GTG), glutamate 158, arginine 161, and aspartate 204 each bind GTP. The tract at residues 339–393 (GPSTQKQADKSRRELQDVDSKQRAADDAGAGGFGGAHSDGGQDEVEQENGLDVIR) is disordered. Over residues 345-364 (QADKSRRELQDVDSKQRAAD) the composition is skewed to basic and acidic residues. Over residues 367-376 (GAGGFGGAHS) the composition is skewed to gly residues.

This sequence belongs to the FtsZ family. In terms of assembly, homodimer. Polymerizes to form a dynamic ring structure in a strictly GTP-dependent manner. Interacts directly with several other division proteins.

The protein resides in the cytoplasm. Its function is as follows. Essential cell division protein that forms a contractile ring structure (Z ring) at the future cell division site. The regulation of the ring assembly controls the timing and the location of cell division. One of the functions of the FtsZ ring is to recruit other cell division proteins to the septum to produce a new cell wall between the dividing cells. Binds GTP and shows GTPase activity. Overexpression causes significant changes in cell morphology. This is Cell division protein FtsZ 2 from Halobacterium salinarum (strain ATCC 29341 / DSM 671 / R1).